A 221-amino-acid chain; its full sequence is Lectin L6 (221 aa).

6 tandem repeats follow at residues 1-38 (VQWHQIPGKLMHITATPHFLWGVNSNQQIYLCRQPCYD), 39-75 (GQWTQISGSLKQVDADDHEVWGVNRNDDIYKRPVDGS), 76-113 (GSWVRVSGKLKHVSASGYGYIWGVNSNDQIYKCPKPCN), 114-150 (GAWTQVNGRLKQIDGGQSMVYGVNSANAIYRRPVDGS), 151-188 (GSWQQISGSLKHITGSGLSEVFGVNSNDQIYRCTKPCS), and 189-221 (GQWSLIDGRLKQCDATGNTIVGVNSVDNIYRSG). Residues 1–221 (VQWHQIPGKL…NSVDNIYRSG (221 aa)) are 6 X approximate tandem repeats. C32 and C36 are oxidised to a cystine. The cysteines at positions 108 and 112 are disulfide-linked. Cysteines 183 and 187 form a disulfide.

Belongs to the tectonin family. Hemocytes.

It is found in the cytoplasmic vesicle. Its subcellular location is the secretory vesicle. Functionally, lipopolysaccharide-binding protein with Gram-negative antibacterial activity. Binds zinc and calcium. The protein is Lectin L6 of Tachypleus tridentatus (Japanese horseshoe crab).